The following is a 534-amino-acid chain: Probable protein kinase UbiB (534 aa).

The chain crosses the membrane as a helical span at residues 23 to 43 (DLLFALPLPWFLLAVRYVLPW). Residues 125–492 (RFDVDPLASA…WKKRKDDWFL (368 aa)) enclose the Protein kinase domain. Residues 131-139 (LASASVAQV) and Lys153 contribute to the ATP site. The Proton acceptor role is filled by Asp288. Transmembrane regions (helical) follow at residues 490-510 (WFLRLLGAAHLVGGVMLAIGG) and 512-532 (LNQLGHWPAGIMVAVGVYLIV).

The protein belongs to the ABC1 family. UbiB subfamily.

The protein localises to the cell inner membrane. It functions in the pathway cofactor biosynthesis; ubiquinone biosynthesis [regulation]. Is probably a protein kinase regulator of UbiI activity which is involved in aerobic coenzyme Q (ubiquinone) biosynthesis. This is Probable protein kinase UbiB from Pseudomonas fluorescens (strain SBW25).